Here is a 600-residue protein sequence, read N- to C-terminus: NADH-quinone oxidoreductase subunit C/D (600 aa).

The tract at residues 1 to 190 (MVNNMTDLTA…DPFELTKAKQ (190 aa)) is NADH dehydrogenase I subunit C. The segment at 214–600 (DFMFLNLGPN…IDFVMSDVDR (387 aa)) is NADH dehydrogenase I subunit D.

This sequence in the N-terminal section; belongs to the complex I 30 kDa subunit family. It in the C-terminal section; belongs to the complex I 49 kDa subunit family. NDH-1 is composed of 13 different subunits. Subunits NuoB, CD, E, F, and G constitute the peripheral sector of the complex.

It localises to the cell inner membrane. It carries out the reaction a quinone + NADH + 5 H(+)(in) = a quinol + NAD(+) + 4 H(+)(out). NDH-1 shuttles electrons from NADH, via FMN and iron-sulfur (Fe-S) centers, to quinones in the respiratory chain. The immediate electron acceptor for the enzyme in this species is believed to be ubiquinone. Couples the redox reaction to proton translocation (for every two electrons transferred, four hydrogen ions are translocated across the cytoplasmic membrane), and thus conserves the redox energy in a proton gradient. The chain is NADH-quinone oxidoreductase subunit C/D from Salmonella paratyphi C (strain RKS4594).